A 553-amino-acid polypeptide reads, in one-letter code: CTP synthase (553 aa).

The tract at residues Met1–Ile270 is amidoligase domain. Position 13 (Ser13) interacts with CTP. Ser13 contacts UTP. ATP is bound by residues Ser14 to Ile19 and Asp71. Mg(2+)-binding residues include Asp71 and Glu144. Residues Asp151–Glu153, Lys191–Gln196, and Lys227 each bind CTP. Residues Lys191–Gln196 and Lys227 contribute to the UTP site. A Glutamine amidotransferase type-1 domain is found at Thr295–Asn547. L-glutamine is bound at residue Gly356. The active-site Nucleophile; for glutamine hydrolysis is the Cys383. Residues Leu384–Gln387, Glu407, and Arg473 each bind L-glutamine. Catalysis depends on residues His520 and Glu522.

The protein belongs to the CTP synthase family. In terms of assembly, homotetramer.

The catalysed reaction is UTP + L-glutamine + ATP + H2O = CTP + L-glutamate + ADP + phosphate + 2 H(+). It catalyses the reaction L-glutamine + H2O = L-glutamate + NH4(+). It carries out the reaction UTP + NH4(+) + ATP = CTP + ADP + phosphate + 2 H(+). The protein operates within pyrimidine metabolism; CTP biosynthesis via de novo pathway; CTP from UDP: step 2/2. Its activity is regulated as follows. Allosterically activated by GTP, when glutamine is the substrate; GTP has no effect on the reaction when ammonia is the substrate. The allosteric effector GTP functions by stabilizing the protein conformation that binds the tetrahedral intermediate(s) formed during glutamine hydrolysis. Inhibited by the product CTP, via allosteric rather than competitive inhibition. Catalyzes the ATP-dependent amination of UTP to CTP with either L-glutamine or ammonia as the source of nitrogen. Regulates intracellular CTP levels through interactions with the four ribonucleotide triphosphates. The chain is CTP synthase from Ralstonia pickettii (strain 12J).